Reading from the N-terminus, the 495-residue chain is UDP-N-acetylmuramoyl-L-alanyl-D-glutamate--2,6-diaminopimelate ligase (495 aa).

S29 contacts UDP-N-acetyl-alpha-D-muramoyl-L-alanyl-D-glutamate. 111 to 117 contributes to the ATP binding site; that stretch reads GTNGKTS. Residues 153-154, S180, Q186, and R188 each bind UDP-N-acetyl-alpha-D-muramoyl-L-alanyl-D-glutamate; that span reads TT. N6-carboxylysine is present on K220. Residues R384, 408–411, G459, and E463 each bind meso-2,6-diaminopimelate; that span reads DNPR. A Meso-diaminopimelate recognition motif motif is present at residues 408–411; it reads DNPR.

This sequence belongs to the MurCDEF family. MurE subfamily. The cofactor is Mg(2+). In terms of processing, carboxylation is probably crucial for Mg(2+) binding and, consequently, for the gamma-phosphate positioning of ATP.

The protein localises to the cytoplasm. It catalyses the reaction UDP-N-acetyl-alpha-D-muramoyl-L-alanyl-D-glutamate + meso-2,6-diaminopimelate + ATP = UDP-N-acetyl-alpha-D-muramoyl-L-alanyl-gamma-D-glutamyl-meso-2,6-diaminopimelate + ADP + phosphate + H(+). It participates in cell wall biogenesis; peptidoglycan biosynthesis. Its function is as follows. Catalyzes the addition of meso-diaminopimelic acid to the nucleotide precursor UDP-N-acetylmuramoyl-L-alanyl-D-glutamate (UMAG) in the biosynthesis of bacterial cell-wall peptidoglycan. The protein is UDP-N-acetylmuramoyl-L-alanyl-D-glutamate--2,6-diaminopimelate ligase of Xylella fastidiosa (strain 9a5c).